Reading from the N-terminus, the 462-residue chain is Centrosomal protein of 55 kDa (462 aa).

Basic and acidic residues predominate over residues 1–11; the sequence is MSSRSPKDLIK. The disordered stretch occupies residues 1–25; that stretch reads MSSRSPKDLIKSKWGSRPSSSKSDT. A compositionally biased stretch (low complexity) spans 12-23; sequence SKWGSRPSSSKS. 2 coiled-coil regions span residues 50 to 185 and 228 to 400; these read KVAN…QQWL and YLQE…KQLH. Phosphoserine occurs at positions 96 and 99. Positions 157 to 235 are interaction with TSG101; the sequence is ANCFNSSMNS…EGYLQEEKQK (79 aa). The segment at 160-214 is interaction with PDCD6IP; sequence FNSSMNSIHEKEMQLKDALEKNQQWLVYDQQREAYVKGLLAKIFELEKRTETAAA. The interval 354-462 is required for localization to the interphase centrosome and to the midbody during cytokinesis; sequence QMQACTLDFE…LLVHVEYCMK (109 aa). S423 and S426 each carry phosphoserine. T428 carries the phosphothreonine modification. S434 is modified (phosphoserine; by PLK1).

Homodimer. Interacts (phosphorylated on Ser-423 and Ser-426) with PLK1; the interaction is indirect via the MTMR3:MTMR4 heterooligomer, occurs during early mitosis, regulates the phosphorylation of CEP55 by PLK1 and its recruitment to the midbody where it can mediate cell abscission. Interacts with AKAP9/CG-NAP; the interaction occurs in interphase and is lost upon mitotic entry. Interacts with PCNT/Kendrin; the interaction occurs in interphase and is lost upon mitotic entry. Directly interacts with PDCD6IP; this interaction is required for PDCD6IP targeting to the midbody; CEP55 binds PDCD6IP in a 2:1 stoichiometry; PDCD6IP competes with TSG101 for the same binding site. Interacts with TSG101; TSG101 competes with PDCD6IP for the same binding site; interaction is required for cytokinesis. Interacts with MVB12A, VPS37B, VPS37C and VPS28. There is a hierachy of phosphorylation, where both Ser-423 and Ser-426 are phosphorylated at the onset of mitosis, prior to Ser-434. Phosphorylation at Ser-423 and Ser-426 is required for dissociation from the centrosome at the G2/M boundary. Phosphorylation at the 3 sites, Ser-423, Ser-426 and Ser-434, is required for protein function at the final stages of cell division to complete cytokinesis successfully.

The protein localises to the cytoplasm. It localises to the cytoskeleton. It is found in the microtubule organizing center. Its subcellular location is the centrosome. The protein resides in the centriole. The protein localises to the cleavage furrow. It localises to the midbody. It is found in the midbody ring. Functionally, plays a role in mitotic exit and cytokinesis. Recruits PDCD6IP and TSG101 to midbody during cytokinesis. Required for successful completion of cytokinesis. Not required for microtubule nucleation. Plays a role in the development of the brain and kidney. In Rattus norvegicus (Rat), this protein is Centrosomal protein of 55 kDa.